Here is a 450-residue protein sequence, read N- to C-terminus: Glutamyl-tRNA reductase (450 aa).

Residues 50–53, S109, 114–116, and Q120 contribute to the substrate site; these read TCNR and EPQ. The active-site Nucleophile is the C51. An NADP(+)-binding site is contributed by 189 to 194; sequence GAGEMA. The interval 422–450 is disordered; sequence NEPEQPEAHKNRKRPQPDLPAGCPGKTIL.

This sequence belongs to the glutamyl-tRNA reductase family. As to quaternary structure, homodimer.

The enzyme catalyses (S)-4-amino-5-oxopentanoate + tRNA(Glu) + NADP(+) = L-glutamyl-tRNA(Glu) + NADPH + H(+). It participates in porphyrin-containing compound metabolism; protoporphyrin-IX biosynthesis; 5-aminolevulinate from L-glutamyl-tRNA(Glu): step 1/2. Its function is as follows. Catalyzes the NADPH-dependent reduction of glutamyl-tRNA(Glu) to glutamate 1-semialdehyde (GSA). The chain is Glutamyl-tRNA reductase from Oleidesulfovibrio alaskensis (strain ATCC BAA-1058 / DSM 17464 / G20) (Desulfovibrio alaskensis).